We begin with the raw amino-acid sequence, 319 residues long: MYLQSSLALVLLRAAVVHGYANPGACSGACNIHDPSLIQNGDGTYYRFSTGNNISFASASSIEGPWTALGSVLPGGSSIDNSGRYDPWAPDVQKVGDLYYLYYAVSSFGTQESAIGLATSETMEEGTWTDKGSIVTSTTGDQYNAIDANLLVDGSANYLTFGSFWQDIFQVTLNGDATSSTSTPVNVAFDPATTHPVEGAYLYKYGDYYYLFYSWGTCCGYDTSRPAEGEEYKIKVCRSSTPTGNFVDASGVACTDGGGTVVLESHDNVYGPGGQGVYTDPNLGPVLYYHYVDTTIGYADSQKLFGWNAIDFSSGWPSV.

The N-terminal stretch at 1-19 (MYLQSSLALVLLRAAVVHG) is a signal peptide. The active-site Proton acceptor is Asp34. Asn53 carries N-linked (GlcNAc...) asparagine glycosylation. Glu198 (proton donor) is an active-site residue.

Belongs to the glycosyl hydrolase 43 family.

It localises to the secreted. The catalysed reaction is Endohydrolysis of (1-&gt;5)-alpha-arabinofuranosidic linkages in (1-&gt;5)-arabinans.. Its pathway is glycan metabolism; L-arabinan degradation. Functionally, endo-1,5-alpha-L-arabinanase involved in degradation of pectin. Its preferred substrate is linear 1,5-alpha-L-arabinan. This is Probable arabinan endo-1,5-alpha-L-arabinosidase A (abnA) from Aspergillus flavus (strain ATCC 200026 / FGSC A1120 / IAM 13836 / NRRL 3357 / JCM 12722 / SRRC 167).